The following is a 749-amino-acid chain: Catalase-peroxidase 2 (749 aa).

A signal peptide spans 1 to 27 (MFKRTIPLFAAFTLAISPSIFPNYAHA). Positions 107-229 (WHAAGTYRIY…LAATVMGLIY (123 aa)) form a cross-link, tryptophyl-tyrosyl-methioninium (Trp-Tyr) (with M-255). Catalysis depends on His108, which acts as the Proton acceptor. Positions 229–255 (YVNPEGPNGVPDPLAAAEKIRETFGRM) form a cross-link, tryptophyl-tyrosyl-methioninium (Tyr-Met) (with W-107). His270 contacts heme b.

The protein belongs to the peroxidase family. Peroxidase/catalase subfamily. In terms of assembly, homodimer or homotetramer. It depends on heme b as a cofactor. Post-translationally, formation of the three residue Trp-Tyr-Met cross-link is important for the catalase, but not the peroxidase activity of the enzyme.

It catalyses the reaction H2O2 + AH2 = A + 2 H2O. The enzyme catalyses 2 H2O2 = O2 + 2 H2O. Functionally, bifunctional enzyme with both catalase and broad-spectrum peroxidase activity. This Legionella pneumophila subsp. pneumophila (strain Philadelphia 1 / ATCC 33152 / DSM 7513) protein is Catalase-peroxidase 2.